The primary structure comprises 211 residues: 2,3-bisphosphoglycerate-dependent phosphoglycerate mutase (211 aa).

Substrate is bound by residues 9–16 (RHGQSEWN), 22–23 (TG), Arg-61, 88–91 (ERDY), Lys-99, 115–116 (RR), and 159–160 (GN). His-10 serves as the catalytic Tele-phosphohistidine intermediate. The Proton donor/acceptor role is filled by Glu-88.

Belongs to the phosphoglycerate mutase family. BPG-dependent PGAM subfamily. Homodimer.

It carries out the reaction (2R)-2-phosphoglycerate = (2R)-3-phosphoglycerate. It participates in carbohydrate degradation; glycolysis; pyruvate from D-glyceraldehyde 3-phosphate: step 3/5. Its function is as follows. Catalyzes the interconversion of 2-phosphoglycerate and 3-phosphoglycerate. This Sinorhizobium fredii (strain NBRC 101917 / NGR234) protein is 2,3-bisphosphoglycerate-dependent phosphoglycerate mutase.